Here is a 218-residue protein sequence, read N- to C-terminus: Mitochondrial fission factor (218 aa).

Residues 1–198 (MAEISRIQYE…ENKERAKREM (198 aa)) are Cytoplasmic-facing. Thr89 is modified (phosphothreonine). 4 positions are modified to phosphoserine: Ser129, Ser131, Ser146, and Ser171. The stretch at 167-198 (VDAASLRRQIIKLNRRLQLLEEENKERAKREM) forms a coiled coil. A helical; Anchor for type IV membrane protein membrane pass occupies residues 199–216 (VMYSITVAFWLLNSWLWF). The Mitochondrial intermembrane segment spans residues 217-218 (RR).

Belongs to the Tango11 family. Homodimer. Interacts with DNM1L. Interacts with C11orf65/MFI; the interaction inhibits MFF interaction with DNM1L.

It is found in the mitochondrion outer membrane. Its subcellular location is the peroxisome. It localises to the cytoplasmic vesicle. The protein resides in the secretory vesicle. The protein localises to the synaptic vesicle. Its function is as follows. Plays a role in mitochondrial and peroxisomal fission. Promotes the recruitment and association of the fission mediator dynamin-related protein 1 (DNM1L) to the mitochondrial surface. May be involved in regulation of synaptic vesicle membrane dynamics by recruitment of DNM1L to clathrin-containing vesicles. The protein is Mitochondrial fission factor (MFF) of Pongo abelii (Sumatran orangutan).